The chain runs to 157 residues: Small ribosomal subunit protein uS7 (157 aa).

Belongs to the universal ribosomal protein uS7 family. In terms of assembly, part of the 30S ribosomal subunit. Contacts proteins S9 and S11.

One of the primary rRNA binding proteins, it binds directly to 16S rRNA where it nucleates assembly of the head domain of the 30S subunit. Is located at the subunit interface close to the decoding center, probably blocks exit of the E-site tRNA. In Pseudomonas fluorescens (strain Pf0-1), this protein is Small ribosomal subunit protein uS7.